The following is a 615-amino-acid chain: Elongation factor 4 (615 aa).

Positions 17–198 (ASIRNFCIIA…RVSRTIPAPV (182 aa)) constitute a tr-type G domain. GTP is bound by residues 29–34 (DHGKST) and 145–148 (NKID).

It belongs to the TRAFAC class translation factor GTPase superfamily. Classic translation factor GTPase family. LepA subfamily.

It is found in the cell membrane. The catalysed reaction is GTP + H2O = GDP + phosphate + H(+). Its function is as follows. Required for accurate and efficient protein synthesis under certain stress conditions. May act as a fidelity factor of the translation reaction, by catalyzing a one-codon backward translocation of tRNAs on improperly translocated ribosomes. Back-translocation proceeds from a post-translocation (POST) complex to a pre-translocation (PRE) complex, thus giving elongation factor G a second chance to translocate the tRNAs correctly. Binds to ribosomes in a GTP-dependent manner. In Clavibacter michiganensis subsp. michiganensis (strain NCPPB 382), this protein is Elongation factor 4.